The chain runs to 260 residues: Small ribosomal subunit protein uS2 (260 aa).

Belongs to the universal ribosomal protein uS2 family.

The sequence is that of Small ribosomal subunit protein uS2 from Streptococcus sanguinis (strain SK36).